The primary structure comprises 2643 residues: Ankyrin repeat domain-containing protein 11 (2643 aa).

2 disordered regions span residues 1-90 and 128-170; these read MPKG…KEPV and SANS…RGET. Basic and acidic residues-rich tracts occupy residues 21–54 and 69–90; these read MVEK…VRER and EQKD…KEPV. Residues 128 to 155 show a composition bias toward polar residues; sequence SANSPVDTTPKHPSQSTVCQKGTPNSAS. The span at 156 to 170 shows a compositional bias: basic and acidic residues; the sequence is KTKDKVNKRNERGET. ANK repeat units lie at residues 167–196, 200–229, 233–262, and 266–292; these read RGET…DVNV, AGWT…EVNT, DDDT…NPQQ, and KGET…YTSS. Phosphoserine is present on serine 276. Residues 289 to 365 are disordered; it reads YTSSEESSTE…DRVPPVDDKH (77 aa). Over residues 295–305 the composition is skewed to acidic residues; sequence SSTESSEEEDA. Residues 309-320 show a composition bias toward polar residues; the sequence is APSSSVDGNNTD. Composition is skewed to basic and acidic residues over residues 322-335 and 356-365; these read EFEK…KNPE and DRVPPVDDKH. Serine 408 carries the phosphoserine modification. Residue threonine 410 is modified to Phosphothreonine. A Phosphoserine modification is found at serine 411. Disordered stretches follow at residues 423–504, 517–651, and 727–805; these read GEKL…CLKG, SLSA…GQCS, and DANK…DKEK. A compositionally biased stretch (basic and acidic residues) spans 438 to 451; it reads KARESSSSRQQKEK. Basic residues predominate over residues 452 to 462; it reads NKLKKKRKKET. A compositionally biased stretch (basic and acidic residues) spans 463–475; that stretch reads KGKEVRFGKRSDK. Acidic residues predominate over residues 484–494; sequence ESSESEEDDGD. Residues 517–528 are compositionally biased toward low complexity; sequence SLSASSTSSHGS. Basic and acidic residues predominate over residues 537–550; sequence GHTDQHTKHWRTDN. A compositionally biased stretch (polar residues) spans 557–574; the sequence is PAWSEVSSLSDSSRTGLT. Over residues 575 to 588 the composition is skewed to low complexity; that stretch reads SESDCSSEGSSVES. Composition is skewed to basic residues over residues 591-602 and 633-646; these read PTRRKQEHRKRG and VKKH…KHKE. Serine 838 carries the phosphoserine modification. Basic and acidic residues-rich tracts occupy residues 918–931 and 938–962; these read KNSE…EKHK and SEKD…IRSE. Disordered regions lie at residues 918–962, 977–1037, and 1051–1074; these read KNSE…IRSE, SFKD…STLD, and EKKD…FDQL. Serine 1070 carries the phosphoserine modification. Phosphothreonine is present on threonine 1111. Residue serine 1114 is modified to Phosphoserine. 2 disordered regions span residues 1114–1388 and 1420–1711; these read SEDE…KDAS and LFSS…TPSC. Composition is skewed to basic and acidic residues over residues 1133–1297, 1326–1343, 1355–1388, 1420–1444, 1464–1535, 1546–1564, 1577–1587, and 1595–1640; these read DTQR…DKIS, AEDK…LREK, KSHE…KDAS, LFSS…KELK, RERW…KGDS, VPSR…KLLG, LSQKDLEIEER, and MKQM…KVKE. Serine 1676 carries the phosphoserine modification. Polar residues predominate over residues 1678 to 1695; it reads RTEQSRPTGVPTPTSVVS. 2 positions are modified to phosphoserine: serine 1777 and serine 1832. Phosphotyrosine is present on residues tyrosine 1835 and tyrosine 1836. Serine 1837 and serine 1844 each carry phosphoserine. 3 disordered regions span residues 1863-1900, 1981-2027, and 2111-2386; these read PPDS…GLPL, SPKH…EVKD, and HEAF…STQQ. Serine 1981 and serine 2139 each carry phosphoserine. 2 stretches are compositionally biased toward pro residues: residues 2150–2160 and 2175–2184; these read PVPPAESPPGP and EEPPAPPPQE. The segment covering 2273-2284 has biased composition (low complexity); sequence SAEASCVVAAAE. Positions 2297–2315 are enriched in basic and acidic residues; sequence PEPKPTSEVPKAPKVEEVP. The important for protein degradation stretch occupies residues 2349–2643; sequence AKGRASEEED…VNDDFVLLPA (295 aa). Positions 2371–2386 are enriched in low complexity; that stretch reads RSSQQLQQQLNTSTQQ.

Interacts with the PAS region of the p160 coactivators. Post-translationally, subject to proteasomal degradation which is probably essential to regulate its activity.

The protein localises to the nucleus. Chromatin regulator which modulates histone acetylation and gene expression in neural precursor cells. May recruit histone deacetylases (HDACs) to the p160 coactivators/nuclear receptor complex to inhibit ligand-dependent transactivation. Has a role in proliferation and development of cortical neural precursors. May also regulate bone homeostasis. The protein is Ankyrin repeat domain-containing protein 11 of Mus musculus (Mouse).